Here is a 173-residue protein sequence, read N- to C-terminus: Crossover junction endodeoxyribonuclease RuvC (173 aa).

Active-site residues include Asp-8, Glu-67, and Asp-139. Mg(2+) is bound by residues Asp-8, Glu-67, and Asp-139.

The protein belongs to the RuvC family. In terms of assembly, homodimer which binds Holliday junction (HJ) DNA. The HJ becomes 2-fold symmetrical on binding to RuvC with unstacked arms; it has a different conformation from HJ DNA in complex with RuvA. In the full resolvosome a probable DNA-RuvA(4)-RuvB(12)-RuvC(2) complex forms which resolves the HJ. Requires Mg(2+) as cofactor.

The protein localises to the cytoplasm. It carries out the reaction Endonucleolytic cleavage at a junction such as a reciprocal single-stranded crossover between two homologous DNA duplexes (Holliday junction).. In terms of biological role, the RuvA-RuvB-RuvC complex processes Holliday junction (HJ) DNA during genetic recombination and DNA repair. Endonuclease that resolves HJ intermediates. Cleaves cruciform DNA by making single-stranded nicks across the HJ at symmetrical positions within the homologous arms, yielding a 5'-phosphate and a 3'-hydroxyl group; requires a central core of homology in the junction. The consensus cleavage sequence is 5'-(A/T)TT(C/G)-3'. Cleavage occurs on the 3'-side of the TT dinucleotide at the point of strand exchange. HJ branch migration catalyzed by RuvA-RuvB allows RuvC to scan DNA until it finds its consensus sequence, where it cleaves and resolves the cruciform DNA. The sequence is that of Crossover junction endodeoxyribonuclease RuvC from Yersinia enterocolitica serotype O:8 / biotype 1B (strain NCTC 13174 / 8081).